A 348-amino-acid polypeptide reads, in one-letter code: L-threonine 3-dehydrogenase (348 aa).

C38 contacts Zn(2+). Residues T40 and H43 each act as charge relay system in the active site. Zn(2+)-binding residues include H63, E64, C93, C96, C99, and C107. Residues I175, D195, R200, L263–I265, and I287–Y288 each bind NAD(+).

It belongs to the zinc-containing alcohol dehydrogenase family. As to quaternary structure, homotetramer. Zn(2+) serves as cofactor.

It is found in the cytoplasm. It catalyses the reaction L-threonine + NAD(+) = (2S)-2-amino-3-oxobutanoate + NADH + H(+). The protein operates within amino-acid degradation; L-threonine degradation via oxydo-reductase pathway; glycine from L-threonine: step 1/2. Catalyzes the NAD(+)-dependent oxidation of L-threonine to 2-amino-3-ketobutyrate. This is L-threonine 3-dehydrogenase from Deinococcus radiodurans (strain ATCC 13939 / DSM 20539 / JCM 16871 / CCUG 27074 / LMG 4051 / NBRC 15346 / NCIMB 9279 / VKM B-1422 / R1).